The primary structure comprises 185 residues: Acireductone dioxygenase (185 aa).

Positions 101, 103, 107, and 145 each coordinate Fe(2+). Ni(2+)-binding residues include H101, H103, E107, and H145.

It belongs to the acireductone dioxygenase (ARD) family. Monomer. Fe(2+) serves as cofactor. It depends on Ni(2+) as a cofactor.

The enzyme catalyses 1,2-dihydroxy-5-(methylsulfanyl)pent-1-en-3-one + O2 = 3-(methylsulfanyl)propanoate + CO + formate + 2 H(+). It catalyses the reaction 1,2-dihydroxy-5-(methylsulfanyl)pent-1-en-3-one + O2 = 4-methylsulfanyl-2-oxobutanoate + formate + 2 H(+). Its pathway is amino-acid biosynthesis; L-methionine biosynthesis via salvage pathway; L-methionine from S-methyl-5-thio-alpha-D-ribose 1-phosphate: step 5/6. Its function is as follows. Catalyzes 2 different reactions between oxygen and the acireductone 1,2-dihydroxy-3-keto-5-methylthiopentene (DHK-MTPene) depending upon the metal bound in the active site. Fe-containing acireductone dioxygenase (Fe-ARD) produces formate and 2-keto-4-methylthiobutyrate (KMTB), the alpha-ketoacid precursor of methionine in the methionine recycle pathway. Ni-containing acireductone dioxygenase (Ni-ARD) produces methylthiopropionate, carbon monoxide and formate, and does not lie on the methionine recycle pathway. The protein is Acireductone dioxygenase of Synechococcus sp. (strain RCC307).